The primary structure comprises 373 residues: tRNA-specific 2-thiouridylase MnmA (373 aa).

ATP-binding positions include 12–19 (GMSGGVDS) and Met-38. Positions 98-100 (NPD) are interaction with target base in tRNA. Residue Cys-103 is the Nucleophile of the active site. A disulfide bridge links Cys-103 with Cys-200. Gly-127 is an ATP binding site. An interaction with tRNA region spans residues 150 to 152 (KDQ). Cys-200 serves as the catalytic Cysteine persulfide intermediate. The tract at residues 312-313 (RY) is interaction with tRNA.

Belongs to the MnmA/TRMU family.

The protein localises to the cytoplasm. It catalyses the reaction S-sulfanyl-L-cysteinyl-[protein] + uridine(34) in tRNA + AH2 + ATP = 2-thiouridine(34) in tRNA + L-cysteinyl-[protein] + A + AMP + diphosphate + H(+). In terms of biological role, catalyzes the 2-thiolation of uridine at the wobble position (U34) of tRNA, leading to the formation of s(2)U34. The chain is tRNA-specific 2-thiouridylase MnmA from Streptococcus pneumoniae (strain Hungary19A-6).